A 370-amino-acid chain; its full sequence is UDP-3-O-acylglucosamine N-acyltransferase (370 aa).

H252 acts as the Proton acceptor in catalysis. The segment at 348–370 (NAAAEKRDGPAPNAASKATGDKV) is disordered.

This sequence belongs to the transferase hexapeptide repeat family. LpxD subfamily. In terms of assembly, homotrimer.

It catalyses the reaction a UDP-3-O-[(3R)-3-hydroxyacyl]-alpha-D-glucosamine + a (3R)-hydroxyacyl-[ACP] = a UDP-2-N,3-O-bis[(3R)-3-hydroxyacyl]-alpha-D-glucosamine + holo-[ACP] + H(+). The protein operates within bacterial outer membrane biogenesis; LPS lipid A biosynthesis. Functionally, catalyzes the N-acylation of UDP-3-O-acylglucosamine using 3-hydroxyacyl-ACP as the acyl donor. Is involved in the biosynthesis of lipid A, a phosphorylated glycolipid that anchors the lipopolysaccharide to the outer membrane of the cell. The protein is UDP-3-O-acylglucosamine N-acyltransferase of Paraburkholderia phytofirmans (strain DSM 17436 / LMG 22146 / PsJN) (Burkholderia phytofirmans).